The primary structure comprises 213 residues: MSDAQSARDNYQGVWGQRIGFGRKPALLMIDFMQGYTTPGAPLYAPGVVAAVEQAAGLLALARDCGTLVVHTNIRYQPPHFADGGVWVRKAPVMKDMVEGNPLAAFCEAVAPQAGEVVLSKQYASAFFATSLAPLLHAQGVDTVVLAGCSTSGCIRASAVDAMQHGFRTIVVRECVGDRHSDPHEANLFDIDSKYGDVVTRQDAMQQLRHLAG.

The active-site Nucleophile is the C154.

The protein belongs to the isochorismatase family.

The enzyme catalyses maleamate + H2O = maleate + NH4(+). It participates in cofactor degradation; nicotinate degradation. Its function is as follows. Maleamate amidase that transforms maleamate into maleate and ammonia in the aerobic nicotinate degradation pathway. The chain is Maleamate amidohydrolase (nicF) from Pseudomonas putida (strain ATCC 47054 / DSM 6125 / CFBP 8728 / NCIMB 11950 / KT2440).